The primary structure comprises 533 residues: Di/tripeptide-binding protein 4 (533 aa).

Positions 1 to 25 (MLHPLLRHLPLALALALCAAGAAQA) are cleaved as a signal peptide.

This sequence belongs to the bacterial solute-binding protein 5 family. As to quaternary structure, the complex is composed of two ATP-binding proteins (DppD and DppF), two transmembrane proteins (DppB and DppC) and a solute-binding protein (DppA4). Five orthologous SBPs (DppA1-A5) are present in P.aeruginosa, which increases the substrate specificity of the DppBCDF transporter.

Part of the ABC transporter DppABCDF involved in the uptake of various di/tripeptides. Prefers dipeptides with acidic residues at the C-terminal end. Efficiently uses tripeptides. This chain is Di/tripeptide-binding protein 4, found in Pseudomonas aeruginosa (strain UCBPP-PA14).